An 847-amino-acid polypeptide reads, in one-letter code: Alanine--tRNA ligase (847 aa).

Residues histidine 554, histidine 558, cysteine 656, and histidine 660 each coordinate Zn(2+).

This sequence belongs to the class-II aminoacyl-tRNA synthetase family. The cofactor is Zn(2+).

The protein resides in the cytoplasm. The catalysed reaction is tRNA(Ala) + L-alanine + ATP = L-alanyl-tRNA(Ala) + AMP + diphosphate. Catalyzes the attachment of alanine to tRNA(Ala) in a two-step reaction: alanine is first activated by ATP to form Ala-AMP and then transferred to the acceptor end of tRNA(Ala). Also edits incorrectly charged Ser-tRNA(Ala) and Gly-tRNA(Ala) via its editing domain. The chain is Alanine--tRNA ligase from Helicobacter acinonychis (strain Sheeba).